Here is a 267-residue protein sequence, read N- to C-terminus: uncharacterized protein (267 aa).

The stretch at 50–90 (PGLNAVTASKFSPDGRWLLNIADGSGYVQLWDTAKGERVKT) is one WD repeat.

This is an uncharacterized protein from Deinococcus radiodurans (strain ATCC 13939 / DSM 20539 / JCM 16871 / CCUG 27074 / LMG 4051 / NBRC 15346 / NCIMB 9279 / VKM B-1422 / R1).